The following is a 146-amino-acid chain: Protein archease (146 aa).

3 residues coordinate Ca(2+): aspartate 16, aspartate 145, and isoleucine 146.

It belongs to the archease family.

Activates the tRNA-splicing ligase complex by facilitating the enzymatic turnover of catalytic subunit RtcB. Acts by promoting the guanylylation of RtcB, a key intermediate step in tRNA ligation. Can also alter the NTP specificity of RtcB such that ATP, dGTP or ITP is used efficiently. This is Protein archease from Methanosarcina barkeri (strain Fusaro / DSM 804).